Consider the following 373-residue polypeptide: Transcription factor bHLH87 (373 aa).

The segment at 127–227 is disordered; sequence SAESENREIT…GGSSNISFQH (101 aa). The span at 188–218 shows a compositional bias: basic and acidic residues; it reads PQDDSEKGGFKLIYDENQSKSKKPRTEKERG. Residues 275–324 enclose the bHLH domain; it reads ISTDPQTVAARQRRERISEKIRVLQTLVPGGTKMDTASMLDEAANYLKFL.

As to quaternary structure, homodimer. As to expression, flowers.

It is found in the nucleus. This Arabidopsis thaliana (Mouse-ear cress) protein is Transcription factor bHLH87 (BHLH87).